A 513-amino-acid polypeptide reads, in one-letter code: Ectonucleoside triphosphate diphosphohydrolase 1 (513 aa).

Residues 1–16 (MEDRRESELKVFCSKN) are Cytoplasmic-facing. A helical membrane pass occupies residues 17-37 (ILSILGFSCIIAVIALLALGL). Residues 38-481 (TQNKALPENV…SPPLPHSTYV (444 aa)) lie on the Extracellular side of the membrane. An N-linked (GlcNAc...) asparagine glycan is attached at Asn73. The Proton acceptor role is filled by Glu174. N-linked (GlcNAc...) asparagine glycans are attached at residues Asn227 and Asn245. 2 disulfides stabilise this stretch: Cys255/Cys300 and Cys281/Cys327. Asn307 and Asn336 each carry an N-linked (GlcNAc...) asparagine glycan. Cys340 and Cys345 are joined by a disulfide. Asn373 is a glycosylation site (N-linked (GlcNAc...) asparagine). Residues Cys393 and Cys416 are joined by a disulfide bond. Asn460 carries N-linked (GlcNAc...) asparagine glycosylation. A helical transmembrane segment spans residues 482–502 (FLMVLFSLILLAVIIVGIVVF). At 503-513 (HKPSYFWKDMV) the chain is on the cytoplasmic side.

It belongs to the GDA1/CD39 NTPase family. As to quaternary structure, homodimer; disulfide-linked. Ca(2+) serves as cofactor. Mg(2+) is required as a cofactor. Post-translationally, N-glycosylated. In terms of processing, the N-terminus is blocked. Palmitoylated on Cys-13; which is required for caveola targeting.

The protein localises to the membrane. It localises to the caveola. The catalysed reaction is a ribonucleoside 5'-triphosphate + 2 H2O = a ribonucleoside 5'-phosphate + 2 phosphate + 2 H(+). It catalyses the reaction a ribonucleoside 5'-triphosphate + H2O = a ribonucleoside 5'-diphosphate + phosphate + H(+). The enzyme catalyses a ribonucleoside 5'-diphosphate + H2O = a ribonucleoside 5'-phosphate + phosphate + H(+). It carries out the reaction ATP + 2 H2O = AMP + 2 phosphate + 2 H(+). The catalysed reaction is ATP + H2O = ADP + phosphate + H(+). It catalyses the reaction ADP + H2O = AMP + phosphate + H(+). The enzyme catalyses CTP + 2 H2O = CMP + 2 phosphate + 2 H(+). It carries out the reaction CTP + H2O = CDP + phosphate + H(+). The catalysed reaction is CDP + H2O = CMP + phosphate + H(+). It catalyses the reaction GTP + 2 H2O = GMP + 2 phosphate + 2 H(+). The enzyme catalyses GTP + H2O = GDP + phosphate + H(+). It carries out the reaction GDP + H2O = GMP + phosphate + H(+). The catalysed reaction is ITP + 2 H2O = IMP + 2 phosphate + 2 H(+). It catalyses the reaction ITP + H2O = IDP + phosphate + H(+). The enzyme catalyses IDP + H2O = IMP + phosphate + H(+). It carries out the reaction UTP + 2 H2O = UMP + 2 phosphate + 2 H(+). The catalysed reaction is UTP + H2O = UDP + phosphate + H(+). It catalyses the reaction UDP + H2O = UMP + phosphate + H(+). Catalyzes the hydrolysis of both di- and triphosphate nucleotides (NDPs and NTPs) and hydrolyze NTPs to nucleotide monophosphates (NMPs) in two distinct successive phosphate-releasing steps, with NDPs as intermediates and participates in the regulation of extracellular levels of nucleotides. By hydrolyzing proinflammatory ATP and platelet-activating ADP to AMP, it blocks platelet aggregation and supports blood flow. The chain is Ectonucleoside triphosphate diphosphohydrolase 1 from Bos taurus (Bovine).